Here is a 545-residue protein sequence, read N- to C-terminus: Membrane protein insertase YidC (545 aa).

The next 6 membrane-spanning stretches (helical) occupy residues 10–30 (AVYLSLFFIGIFMLLDDFLFS), 319–339 (LLYFLQVPMQLIMQIFYNVIP), 341–361 (WGLSIMFLTIVVRILIFPLTF), 407–427 (IGGCFPILLQLPVFFALYGLV), 467–487 (ILPFIMMITQLLSTIVSSNVS), and 502–522 (MPIMFFFILYDMPSGLLIYWI).

Belongs to the OXA1/ALB3/YidC family. Type 1 subfamily. Interacts with the Sec translocase complex via SecD. Specifically interacts with transmembrane segments of nascent integral membrane proteins during membrane integration.

The protein localises to the cell inner membrane. Functionally, required for the insertion and/or proper folding and/or complex formation of integral membrane proteins into the membrane. Involved in integration of membrane proteins that insert both dependently and independently of the Sec translocase complex, as well as at least some lipoproteins. Aids folding of multispanning membrane proteins. The sequence is that of Membrane protein insertase YidC from Borrelia recurrentis (strain A1).